A 365-amino-acid polypeptide reads, in one-letter code: Chorismate synthase (365 aa).

NADP(+) is bound by residues R48 and R54. FMN-binding positions include 125–127, 238–239, G278, 293–297, and R319; these read RSS, NA, and KPTSS.

It belongs to the chorismate synthase family. Homotetramer. FMNH2 serves as cofactor.

The enzyme catalyses 5-O-(1-carboxyvinyl)-3-phosphoshikimate = chorismate + phosphate. The protein operates within metabolic intermediate biosynthesis; chorismate biosynthesis; chorismate from D-erythrose 4-phosphate and phosphoenolpyruvate: step 7/7. Functionally, catalyzes the anti-1,4-elimination of the C-3 phosphate and the C-6 proR hydrogen from 5-enolpyruvylshikimate-3-phosphate (EPSP) to yield chorismate, which is the branch point compound that serves as the starting substrate for the three terminal pathways of aromatic amino acid biosynthesis. This reaction introduces a second double bond into the aromatic ring system. This is Chorismate synthase from Alteromonas mediterranea (strain DSM 17117 / CIP 110805 / LMG 28347 / Deep ecotype).